Consider the following 148-residue polypeptide: MGFTEKQEALVNASYEAFKQNLPGNSVLFYSFILEKAPAAKGMFSFLKDFDEVPQNNPSLQAHAEKVFGLVRDSAAQLRATGVVVLADASLGSVHVQKGVLDPHFVVVKEALLKTLKEAGGATWSDEVSNAWEVAYDELSAAIKKAMS.

Positions 2–148 (GFTEKQEALV…LSAAIKKAMS (147 aa)) constitute a Globin domain. Tyrosine 30 is modified (nitrated tyrosine). Serine 45 contributes to the heme b binding site. Serine 45 is subject to Phosphoserine. Histidine 63 provides a ligand contact to O2. Heme b is bound by residues lysine 66, histidine 95, and lysine 98. Tyrosine 136 is subject to Nitrated tyrosine.

Belongs to the plant globin family. In terms of assembly, monomer. In terms of processing, nitrated in effective nodules and particularly in hypoxic conditions; this mechanism may play a protective role in the symbiosis by buffering toxic peroxynitrite NO(2)(-). Nitration level decrease during nodule senescence. Post-translationally, phosphorylation at Ser-45 disrupts the molecular environment of its porphyrin ring oxygen binding pocket, thus leading to a reduced oxygen consumption and to the delivery of oxygen O(2) to symbiosomes. Stem nodules.

Its subcellular location is the cytoplasm. The protein resides in the cytosol. It is found in the nucleus. Functionally, leghemoglobin that reversibly binds oxygen O(2) through a pentacoordinated heme iron. In stem nodules, facilitates the diffusion of oxygen to the bacteroids while preventing the bacterial nitrogenase from being inactivated by buffering dioxygen, nitric oxide and carbon monoxide, and promoting the formation of reactive oxygen species (ROS, e.g. H(2)O(2)). This role is essential for symbiotic nitrogen fixation (SNF). The sequence is that of Leghemoglobin 3 from Sesbania rostrata.